The primary structure comprises 284 residues: Tropomyosin alpha-1 chain (284 aa).

Residues 1-38 (MDAIKKKMQMLKLDKENALDRAEQAEADKKAAEERSKQ) are disordered. Residues 1 to 284 (MDAIKKKMQM…DHALNDMTSI (284 aa)) are a coiled coil. Over residues 12 to 38 (KLDKENALDRAEQAEADKKAAEERSKQ) the composition is skewed to basic and acidic residues.

It belongs to the tropomyosin family. As to quaternary structure, homodimer. Heterodimer of an alpha (TPM1, TPM3 or TPM4) and a beta (TPM2) chain. Interacts with HRG (via the HRR domain); the interaction contributes to the antiangiogenic properties of the histidine/proline-rich region (HRR) of HRG.

The protein resides in the cytoplasm. Its subcellular location is the cytoskeleton. Its function is as follows. Binds to actin filaments in muscle and non-muscle cells. Plays a central role, in association with the troponin complex, in the calcium dependent regulation of vertebrate striated muscle contraction. Smooth muscle contraction is regulated by interaction with caldesmon. In non-muscle cells is implicated in stabilizing cytoskeleton actin filaments. This chain is Tropomyosin alpha-1 chain (TPM1), found in Coturnix japonica (Japanese quail).